A 787-amino-acid chain; its full sequence is Bifunctional dethiobiotin synthetase/adenosylmethionine-8-amino-7-oxononanoate aminotransferase (787 aa).

23-28 contacts ATP; it reads DVGKTI. Thr27 is a binding site for Mg(2+). Thr54 provides a ligand contact to substrate. Residues Asp61 and Glu123 each contribute to the Mg(2+) site. ATP contacts are provided by residues 123 to 126 and 184 to 185; these read ETAG and KD. A (8S)-8-amino-7-oxononanoate-binding site is contributed by 323–324; it reads WW. Pyridoxal 5'-phosphate is bound at residue 384 to 385; that stretch reads GS. Tyr421 is a (8S)-8-amino-7-oxononanoate binding site. Asp582 contacts pyridoxal 5'-phosphate. Residues Lys611 and Gly645 each contribute to the (8S)-8-amino-7-oxononanoate site. 646–647 provides a ligand contact to pyridoxal 5'-phosphate; the sequence is HS. (8S)-8-amino-7-oxononanoate is bound at residue Arg756.

This sequence in the N-terminal section; belongs to the dethiobiotin synthetase family. It in the C-terminal section; belongs to the class-III pyridoxal-phosphate-dependent aminotransferase family. BioA subfamily. In terms of assembly, homodimer. Mg(2+) is required as a cofactor. Pyridoxal 5'-phosphate serves as cofactor.

It localises to the mitochondrion matrix. It catalyses the reaction (7R,8S)-7,8-diammoniononanoate + CO2 + ATP = (4R,5S)-dethiobiotin + ADP + phosphate + 3 H(+). The enzyme catalyses (8S)-8-amino-7-oxononanoate + S-adenosyl-L-methionine = S-adenosyl-4-methylsulfanyl-2-oxobutanoate + (7R,8S)-7,8-diammoniononanoate. Its pathway is cofactor biosynthesis; biotin biosynthesis; biotin from 7,8-diaminononanoate: step 1/2. The protein operates within cofactor biosynthesis; biotin biosynthesis; 7,8-diaminononanoate from 8-amino-7-oxononanoate (SAM route): step 1/1. Bifunctional enzyme; part of the cluster involved in the biosynthesis of biotin (also known as vitamin B8 or vitamin H), a water-soluble vitamin that functions as a prosthetic group of many carboxylases, such as acetyl-CoA carboxylase and pyruvate carboxylase. Catalyzes a mechanistically unusual reaction, the ATP-dependent insertion of CO2 between the N7 and N8 nitrogen atoms of 7,8-diaminopelargonic acid (DAPA) to form an ureido ring. Also catalyzes the transfer of the alpha-amino group from S-adenosyl-L-methionine (SAM) to 7-keto-8-aminopelargonic acid (KAPA) to form 7,8-diaminopelargonic acid (DAPA). It is the only animotransferase known to utilize SAM as an amino donor. In Emericella nidulans (strain FGSC A4 / ATCC 38163 / CBS 112.46 / NRRL 194 / M139) (Aspergillus nidulans), this protein is Bifunctional dethiobiotin synthetase/adenosylmethionine-8-amino-7-oxononanoate aminotransferase.